We begin with the raw amino-acid sequence, 425 residues long: Dihydroorotase (425 aa).

Residues His60 and His62 each contribute to the Zn(2+) site. Substrate contacts are provided by residues 62–64 and Asn94; that span reads HLR. Zn(2+) is bound by residues Asp152, His179, and His232. Asn278 is a binding site for substrate. A Zn(2+)-binding site is contributed by Asp305. The active site involves Asp305. His309 is a substrate binding site.

The protein belongs to the metallo-dependent hydrolases superfamily. DHOase family. Class I DHOase subfamily. The cofactor is Zn(2+).

It catalyses the reaction (S)-dihydroorotate + H2O = N-carbamoyl-L-aspartate + H(+). Its pathway is pyrimidine metabolism; UMP biosynthesis via de novo pathway; (S)-dihydroorotate from bicarbonate: step 3/3. In terms of biological role, catalyzes the reversible cyclization of carbamoyl aspartate to dihydroorotate. The chain is Dihydroorotase from Syntrophotalea carbinolica (strain DSM 2380 / NBRC 103641 / GraBd1) (Pelobacter carbinolicus).